We begin with the raw amino-acid sequence, 144 residues long: 3-hydroxyacyl-[acyl-carrier-protein] dehydratase FabZ (144 aa).

Histidine 49 is a catalytic residue.

The protein belongs to the thioester dehydratase family. FabZ subfamily.

It localises to the cytoplasm. It catalyses the reaction a (3R)-hydroxyacyl-[ACP] = a (2E)-enoyl-[ACP] + H2O. In terms of biological role, involved in unsaturated fatty acids biosynthesis. Catalyzes the dehydration of short chain beta-hydroxyacyl-ACPs and long chain saturated and unsaturated beta-hydroxyacyl-ACPs. The polypeptide is 3-hydroxyacyl-[acyl-carrier-protein] dehydratase FabZ (Alkaliphilus oremlandii (strain OhILAs) (Clostridium oremlandii (strain OhILAs))).